The chain runs to 294 residues: Taste receptor type 2 member 143 (294 aa).

Residues M1–L7 are Extracellular-facing. The chain crosses the membrane as a helical span at residues I8 to I28. At I29 to A43 the chain is on the cytoplasmic side. A helical transmembrane segment spans residues V44–L64. The Extracellular segment spans residues N65–V80. Residues G81–F101 traverse the membrane as a helical segment. Topologically, residues Y102 to L128 are cytoplasmic. The chain crosses the membrane as a helical span at residues L129–I149. Residues A150–H180 lie on the Extracellular side of the membrane. A glycan (N-linked (GlcNAc...) asparagine) is linked at N162. A helical transmembrane segment spans residues A181–F201. At S202–M227 the chain is on the cytoplasmic side. A helical transmembrane segment spans residues A228–I248. Residues S249–W260 lie on the Extracellular side of the membrane. Residues Y261–L281 form a helical membrane-spanning segment. Residues S282–F294 are Cytoplasmic-facing.

This sequence belongs to the G-protein coupled receptor T2R family.

The protein localises to the membrane. Its function is as follows. Putative taste receptor which may play a role in the perception of bitterness. The protein is Taste receptor type 2 member 143 of Rattus norvegicus (Rat).